The following is a 644-amino-acid chain: Exoribonuclease 2 (644 aa).

The RNB domain occupies 189–516; that stretch reads REDLTALDFV…NHRLLKAVIK (328 aa). One can recognise an S1 motif domain in the interval 561 to 643; that stretch reads DTRFAAEIVD…ETRSIIARPV (83 aa).

The protein belongs to the RNR ribonuclease family. RNase II subfamily.

The protein resides in the cytoplasm. The enzyme catalyses Exonucleolytic cleavage in the 3'- to 5'-direction to yield nucleoside 5'-phosphates.. In terms of biological role, involved in mRNA degradation. Hydrolyzes single-stranded polyribonucleotides processively in the 3' to 5' direction. This is Exoribonuclease 2 from Escherichia coli O127:H6 (strain E2348/69 / EPEC).